A 353-amino-acid polypeptide reads, in one-letter code: Jasmonate-induced oxygenase 4 (353 aa).

The region spanning Val-202–Pro-302 is the Fe2OG dioxygenase domain. Arg-207 provides a ligand contact to jasmonate. The 2-oxoglutarate site is built by Asn-209 and Tyr-211. Residues His-226, Asp-228, and His-283 each contribute to the Fe cation site. Residues Arg-293 and Ser-295 each contribute to the 2-oxoglutarate site. Jasmonate is bound by residues Arg-332 and Arg-336.

This sequence belongs to the iron/ascorbate-dependent oxidoreductase family. The cofactor is L-ascorbate. Requires Fe(2+) as cofactor.

It carries out the reaction jasmonate + 2-oxoglutarate + O2 = (1R,2R)-12-hydroxyjasmonate + succinate + CO2. In terms of biological role, 2-oxoglutarate-dependent dioxygenase involved in the oxidation of jasmonate (JA), a stress-induced phytohormone synthesized in response to attack by pathogens and herbivores, which triggers the activation of defense responses via the JA-mediated signaling pathway. Converts JA to 12-hydroxyjasmonate (12OH-JA), an inactive form of JA. Is specific to free JA, and cannot oxidize the bioactive form jasmonoyl-L-isoleucine (JA-Ile) or other JA-amino acid conjugates. Prevents over-accumulation of JA and indirectly its bioactive form JA-Ile under stress response. Acts as a negative regulator of JA-mediated defense signaling, by contributing to 12OH-JA accumulation, which represses JA defense responses upon infection by the fungal pathogen Botrytis cinerea. Acts as a negative regulator of JA-mediated defense responses upon infestation by the herbivorous caterpillar Mamestra brassicae. The polypeptide is Jasmonate-induced oxygenase 4 (Arabidopsis thaliana (Mouse-ear cress)).